The following is a 709-amino-acid chain: Kelch-like protein 11 (709 aa).

The N-terminal stretch at 1–15 (MAAAVAAAAAAAAAA) is a signal peptide. In terms of domain architecture, BTB spans 95-171 (CDITLCFGGA…MYTGRIRVST (77 aa)). The region spanning 206 to 308 (CVAIHSLAHM…KPTYLTRHVK (103 aa)) is the BACK domain. Kelch repeat units lie at residues 361–408 (VIMV…ITES), 409–454 (YVYV…EVKG), 456–502 (LYSI…AIED), 504–557 (FVYI…VVNS), and 611–662 (DVFI…HVRI). The residue at position 466 (Ser466) is a Phosphoserine.

Homodimer. Interacts with CUL3. Component of a cullin-RING-based BCR (BTB-CUL3-RBX1) E3 ubiquitin-protein ligase complex.

In terms of biological role, component of a cullin-RING-based BCR (BTB-CUL3-RBX1) E3 ubiquitin-protein ligase complex that mediates the ubiquitination of target proteins, leading most often to their proteasomal degradation. The polypeptide is Kelch-like protein 11 (Klhl11) (Mus musculus (Mouse)).